We begin with the raw amino-acid sequence, 325 residues long: Replication factor C small subunit (325 aa).

45–52 (GPPGTGKT) serves as a coordination point for ATP.

Belongs to the activator 1 small subunits family. RfcS subfamily. In terms of assembly, heteromultimer composed of small subunits (RfcS) and large subunits (RfcL).

In terms of biological role, part of the RFC clamp loader complex which loads the PCNA sliding clamp onto DNA. The protein is Replication factor C small subunit of Sulfolobus acidocaldarius (strain ATCC 33909 / DSM 639 / JCM 8929 / NBRC 15157 / NCIMB 11770).